The primary structure comprises 128 residues: Sulfurtransferase TusD (128 aa).

C78 acts as the Cysteine persulfide intermediate in catalysis.

This sequence belongs to the DsrE/TusD family. Heterohexamer, formed by a dimer of trimers. The hexameric TusBCD complex contains 2 copies each of TusB, TusC and TusD. The TusBCD complex interacts with TusE.

It localises to the cytoplasm. Its function is as follows. Part of a sulfur-relay system required for 2-thiolation of 5-methylaminomethyl-2-thiouridine (mnm(5)s(2)U) at tRNA wobble positions. Accepts sulfur from TusA and transfers it in turn to TusE. This Salmonella agona (strain SL483) protein is Sulfurtransferase TusD.